A 44-amino-acid polypeptide reads, in one-letter code: Photosystem I reaction center subunit IX (44 aa).

A helical transmembrane segment spans residues tyrosine 7 to isoleucine 27.

This sequence belongs to the PsaJ family.

Its subcellular location is the plastid. It is found in the chloroplast thylakoid membrane. May help in the organization of the PsaE and PsaF subunits. This is Photosystem I reaction center subunit IX from Calycanthus floridus var. glaucus (Eastern sweetshrub).